Consider the following 1488-residue polypeptide: Neuropathy target esterase sws (1488 aa).

Residues 1-34 (MDVLELLRASVNGCYNTLFSDAWSQYVSKQIATT) lie on the Lumenal side of the membrane. The helical transmembrane segment at 35 to 55 (TYWYGALLAIGALFIAWFLYF) threads the bilayer. Residues 56-1488 (KRLASLRLRD…ENVTEADTKN (1433 aa)) lie on the Cytoplasmic side of the membrane. 175 to 302 (IFGHFEKPIF…IRVIQVIMIR (128 aa)) contacts a nucleoside 3',5'-cyclic phosphate. 2 disordered regions span residues 339-379 (PGPV…DPNP) and 402-440 (QQQQ…ATIT). Low complexity-rich tracts occupy residues 344–356 (SQAS…MASR) and 402–413 (QQQQSSGVSVGG). Residues 415-424 (HRSSGACTPT) are compositionally biased toward polar residues. A nucleoside 3',5'-cyclic phosphate contacts are provided by residues 458–587 (ELGL…VVRR) and 576–703 (IVLD…LSHR). In terms of domain architecture, PNPLA spans 929-1095 (LVLGGGGARG…VNNLPGHLWR (167 aa)). The GXGXXG signature appears at 933 to 938 (GGGARG). The GXSXG motif lies at 960-964 (GVSIG). The active-site Nucleophile is Ser962. Asp1082 acts as the Proton acceptor in catalysis. The DGA/G signature appears at 1082 to 1084 (DGG). Residue Ser1176 is modified to Phosphoserine. Disordered stretches follow at residues 1348 to 1376 (RKVD…QGNL) and 1398 to 1488 (EHKR…DTKN). Basic residues predominate over residues 1399-1410 (HKRRQKSKHKRD). Basic and acidic residues predominate over residues 1440 to 1452 (IDAKLDQLRKLQQ). Residues 1456–1470 (QGNESEQEQEQEQEQ) are compositionally biased toward acidic residues.

Belongs to the NTE family. In terms of assembly, interacts with Pka-C3; interaction inhibits the catalytic function of Pka-C3 and the esterase activity of sws.

The protein resides in the endoplasmic reticulum membrane. The enzyme catalyses a 1-acyl-sn-glycero-3-phosphocholine + H2O = sn-glycerol 3-phosphocholine + a fatty acid + H(+). Phospholipase B that deacylates intracellular phosphatidylcholine (PtdCho), generating glycerophosphocholine (GroPtdCho). This deacylation occurs at both sn-2 and sn-1 positions of PtdCho. Its specific chemical modification by certain organophosphorus (OP) compounds leads to distal axonopathy. Plays a role in the signaling mechanism between neurons and glia that regulates glia wrapping during development of the adult brain. Essential for membrane lipid homeostasis and cell survival in both neurons and glia of the adult brain. In Drosophila mojavensis (Fruit fly), this protein is Neuropathy target esterase sws.